A 69-amino-acid chain; its full sequence is DNA-directed RNA polymerase subunit omega (69 aa).

The protein belongs to the RNA polymerase subunit omega family. The RNAP catalytic core consists of 2 alpha, 1 beta, 1 beta' and 1 omega subunit. When a sigma factor is associated with the core the holoenzyme is formed, which can initiate transcription.

It catalyses the reaction RNA(n) + a ribonucleoside 5'-triphosphate = RNA(n+1) + diphosphate. Its function is as follows. Promotes RNA polymerase assembly. Latches the N- and C-terminal regions of the beta' subunit thereby facilitating its interaction with the beta and alpha subunits. This chain is DNA-directed RNA polymerase subunit omega, found in Geotalea daltonii (strain DSM 22248 / JCM 15807 / FRC-32) (Geobacter daltonii).